We begin with the raw amino-acid sequence, 248 residues long: Protein STPG4 (248 aa).

In terms of assembly, interacts with histone H3. Interacts with histone H4.

It localises to the cytoplasm. It is found in the nucleus. In terms of biological role, maternal factor that plays a role in epigenetic chromatin reprogramming during early development of the zygote. Involved in the regulation of gametic DNA demethylation by inducing the conversion of the modified genomic base 5-methylcytosine (5mC) into 5-hydroxymethylcytosine (5hmC). In Homo sapiens (Human), this protein is Protein STPG4.